Reading from the N-terminus, the 200-residue chain is Endoribonuclease YbeY (200 aa).

The segment covering 1 to 18 has biased composition (pro residues); the sequence is MPADPALPDPVPPGPTAP. Positions 1–22 are disordered; the sequence is MPADPALPDPVPPGPTAPVPTD. Zn(2+)-binding residues include H151, H155, and H161.

Belongs to the endoribonuclease YbeY family. It depends on Zn(2+) as a cofactor.

The protein localises to the cytoplasm. In terms of biological role, single strand-specific metallo-endoribonuclease involved in late-stage 70S ribosome quality control and in maturation of the 3' terminus of the 16S rRNA. This is Endoribonuclease YbeY from Rhodospirillum rubrum (strain ATCC 11170 / ATH 1.1.1 / DSM 467 / LMG 4362 / NCIMB 8255 / S1).